The following is a 236-amino-acid chain: tRNA1(Val) (adenine(37)-N6)-methyltransferase (236 aa).

It belongs to the methyltransferase superfamily. tRNA (adenine-N(6)-)-methyltransferase family.

It localises to the cytoplasm. It catalyses the reaction adenosine(37) in tRNA1(Val) + S-adenosyl-L-methionine = N(6)-methyladenosine(37) in tRNA1(Val) + S-adenosyl-L-homocysteine + H(+). In terms of biological role, specifically methylates the adenine in position 37 of tRNA(1)(Val) (anticodon cmo5UAC). This Shewanella sp. (strain MR-7) protein is tRNA1(Val) (adenine(37)-N6)-methyltransferase.